Reading from the N-terminus, the 143-residue chain is Photosystem II extrinsic protein U (143 aa).

Positions 1–29 (MKRLVGVLMILGLMLTSWGLLGSPQTAIA) are cleaved as a signal peptide. Positions 30–44 (ASLSPLSFNPSPVLA) are excised as a propeptide.

It belongs to the PsbU family. PSII is composed of 1 copy each of membrane proteins PsbA, PsbB, PsbC, PsbD, PsbE, PsbF, PsbH, PsbI, PsbJ, PsbK, PsbL, PsbM, PsbT, PsbX, PsbY, PsbZ, Psb30/Ycf12, peripheral proteins PsbO, CyanoQ (PsbQ), PsbU, PsbV and a large number of cofactors. It forms dimeric complexes.

The protein localises to the cellular thylakoid membrane. Its function is as follows. One of the extrinsic, lumenal subunits of photosystem II (PSII). PSII is a light-driven water plastoquinone oxidoreductase, using light energy to abstract electrons from H(2)O, generating a proton gradient subsequently used for ATP formation. The extrinsic proteins stabilize the structure of photosystem II oxygen-evolving complex (OEC), the ion environment of oxygen evolution and protect the OEC against heat-induced inactivation. This chain is Photosystem II extrinsic protein U, found in Leptolyngbya laminosa (Phormidium laminosum).